A 301-amino-acid chain; its full sequence is N-acetylmuramic acid 6-phosphate etherase (301 aa).

The SIS domain maps to 57 to 220; the sequence is VVERLRAGGR…STISMVRLGK (164 aa). Catalysis depends on Glu85, which acts as the Proton donor. Residue Glu116 is part of the active site.

It belongs to the GCKR-like family. MurNAc-6-P etherase subfamily. In terms of assembly, homodimer.

The catalysed reaction is N-acetyl-D-muramate 6-phosphate + H2O = N-acetyl-D-glucosamine 6-phosphate + (R)-lactate. The protein operates within amino-sugar metabolism; N-acetylmuramate degradation. In terms of biological role, specifically catalyzes the cleavage of the D-lactyl ether substituent of MurNAc 6-phosphate, producing GlcNAc 6-phosphate and D-lactate. This Rubrobacter xylanophilus (strain DSM 9941 / JCM 11954 / NBRC 16129 / PRD-1) protein is N-acetylmuramic acid 6-phosphate etherase.